We begin with the raw amino-acid sequence, 391 residues long: Histidinol-phosphate aminotransferase (391 aa).

Lys-248 bears the N6-(pyridoxal phosphate)lysine mark.

The protein belongs to the class-II pyridoxal-phosphate-dependent aminotransferase family. Histidinol-phosphate aminotransferase subfamily. As to quaternary structure, homodimer. The cofactor is pyridoxal 5'-phosphate.

The catalysed reaction is L-histidinol phosphate + 2-oxoglutarate = 3-(imidazol-4-yl)-2-oxopropyl phosphate + L-glutamate. The protein operates within amino-acid biosynthesis; L-histidine biosynthesis; L-histidine from 5-phospho-alpha-D-ribose 1-diphosphate: step 7/9. The polypeptide is Histidinol-phosphate aminotransferase (Shewanella oneidensis (strain ATCC 700550 / JCM 31522 / CIP 106686 / LMG 19005 / NCIMB 14063 / MR-1)).